The chain runs to 363 residues: Pyrimidine monooxygenase RutA (363 aa).

Residues 49–50, Asn-115, Glu-124, 140–141, and Ser-190 each bind FMN; these read IK and RY.

Belongs to the NtaA/SnaA/DszA monooxygenase family. RutA subfamily.

The catalysed reaction is uracil + FMNH2 + NADH + O2 = (Z)-3-ureidoacrylate + FMN + NAD(+) + H2O + H(+). The enzyme catalyses thymine + FMNH2 + NADH + O2 = (Z)-2-methylureidoacrylate + FMN + NAD(+) + H2O + H(+). Its function is as follows. Catalyzes the pyrimidine ring opening between N-3 and C-4 by an unusual flavin hydroperoxide-catalyzed mechanism, adding oxygen atoms in the process to yield ureidoacrylate peracid, that immediately reacts with FMN forming ureidoacrylate and FMN-N(5)-oxide. The FMN-N(5)-oxide reacts spontaneously with NADH to produce FMN. Requires the flavin reductase RutF to regenerate FMN in vivo. This is Pyrimidine monooxygenase RutA from Klebsiella pneumoniae subsp. pneumoniae (strain ATCC 700721 / MGH 78578).